Here is an 878-residue protein sequence, read N- to C-terminus: Alanine--tRNA ligase (878 aa).

Positions 564, 568, 666, and 670 each coordinate Zn(2+).

It belongs to the class-II aminoacyl-tRNA synthetase family. As to quaternary structure, homotetramer. Zn(2+) serves as cofactor.

The protein localises to the cytoplasm. It catalyses the reaction tRNA(Ala) + L-alanine + ATP = L-alanyl-tRNA(Ala) + AMP + diphosphate. Its function is as follows. Catalyzes the attachment of alanine to tRNA(Ala) in a two-step reaction: alanine is first activated by ATP to form Ala-AMP and then transferred to the acceptor end of tRNA(Ala). Also edits incorrectly charged Ser-tRNA(Ala) and Gly-tRNA(Ala) via its editing domain. In Buchnera aphidicola subsp. Acyrthosiphon pisum (strain APS) (Acyrthosiphon pisum symbiotic bacterium), this protein is Alanine--tRNA ligase.